A 408-amino-acid polypeptide reads, in one-letter code: Tryptophan--tRNA ligase, chloroplastic/mitochondrial (408 aa).

The transit peptide at 1 to 52 (MGHATSLSHFLILSSSRFSRLGSLTRLLSKPTSLSGSFSSISVTGQGFRCCC) directs the protein to the chloroplast and mitochondrion. S53 carries the N-acetylserine modification. Residues Q72 and 78–81 (HLGN) contribute to the ATP site. Residues 73–81 (PTGSVHLGN) carry the 'HIGH' region motif. D197 serves as a coordination point for L-tryptophan. Residues 209 to 211 (GED), V260, 269 to 273 (KMSKS), and K272 contribute to the ATP site. The 'KMSKS' region motif lies at 269–273 (KMSKS).

Belongs to the class-I aminoacyl-tRNA synthetase family.

It localises to the plastid. The protein localises to the chloroplast. The protein resides in the mitochondrion. It catalyses the reaction tRNA(Trp) + L-tryptophan + ATP = L-tryptophyl-tRNA(Trp) + AMP + diphosphate + H(+). This Arabidopsis thaliana (Mouse-ear cress) protein is Tryptophan--tRNA ligase, chloroplastic/mitochondrial.